Here is a 328-residue protein sequence, read N- to C-terminus: Phenylalanine--tRNA ligase alpha subunit (328 aa).

Belongs to the class-II aminoacyl-tRNA synthetase family. Phe-tRNA synthetase alpha subunit type 1 subfamily. Tetramer of two alpha and two beta subunits. Mg(2+) is required as a cofactor.

The protein localises to the cytoplasm. The enzyme catalyses tRNA(Phe) + L-phenylalanine + ATP = L-phenylalanyl-tRNA(Phe) + AMP + diphosphate + H(+). This Buchnera aphidicola subsp. Baizongia pistaciae (strain Bp) protein is Phenylalanine--tRNA ligase alpha subunit.